The following is a 395-amino-acid chain: Elongation factor Tu (395 aa).

The 195-residue stretch at 10 to 204 (KEHANIGTIG…AVDDYIPTPE (195 aa)) folds into the tr-type G domain. Residues 19–26 (GHVDHGKT) form a G1 region. 19 to 26 (GHVDHGKT) serves as a coordination point for GTP. Thr26 contributes to the Mg(2+) binding site. The G2 stretch occupies residues 60–64 (GITIN). The segment at 81-84 (DCPG) is G3. Residues 81 to 85 (DCPGH) and 136 to 139 (NKAD) contribute to the GTP site. Positions 136–139 (NKAD) are G4. The interval 174–176 (SAL) is G5.

The protein belongs to the TRAFAC class translation factor GTPase superfamily. Classic translation factor GTPase family. EF-Tu/EF-1A subfamily. Monomer.

Its subcellular location is the cytoplasm. It carries out the reaction GTP + H2O = GDP + phosphate + H(+). In terms of biological role, GTP hydrolase that promotes the GTP-dependent binding of aminoacyl-tRNA to the A-site of ribosomes during protein biosynthesis. This is Elongation factor Tu from Staphylococcus carnosus (strain TM300).